The sequence spans 70 residues: NAD(P)H-quinone oxidoreductase subunit O (70 aa).

This sequence belongs to the complex I NdhO subunit family. NDH-1 can be composed of about 15 different subunits; different subcomplexes with different compositions have been identified which probably have different functions.

The protein localises to the cellular thylakoid membrane. It carries out the reaction a plastoquinone + NADH + (n+1) H(+)(in) = a plastoquinol + NAD(+) + n H(+)(out). The enzyme catalyses a plastoquinone + NADPH + (n+1) H(+)(in) = a plastoquinol + NADP(+) + n H(+)(out). Its function is as follows. NDH-1 shuttles electrons from an unknown electron donor, via FMN and iron-sulfur (Fe-S) centers, to quinones in the respiratory and/or the photosynthetic chain. The immediate electron acceptor for the enzyme in this species is believed to be plastoquinone. Couples the redox reaction to proton translocation, and thus conserves the redox energy in a proton gradient. Cyanobacterial NDH-1 also plays a role in inorganic carbon-concentration. This chain is NAD(P)H-quinone oxidoreductase subunit O, found in Trichormus variabilis (strain ATCC 29413 / PCC 7937) (Anabaena variabilis).